The chain runs to 485 residues: Glutamyl-tRNA(Gln) amidotransferase subunit A (485 aa).

Active-site charge relay system residues include K78 and S153. The active-site Acyl-ester intermediate is the S177.

Belongs to the amidase family. GatA subfamily. As to quaternary structure, heterotrimer of A, B and C subunits.

It carries out the reaction L-glutamyl-tRNA(Gln) + L-glutamine + ATP + H2O = L-glutaminyl-tRNA(Gln) + L-glutamate + ADP + phosphate + H(+). Allows the formation of correctly charged Gln-tRNA(Gln) through the transamidation of misacylated Glu-tRNA(Gln) in organisms which lack glutaminyl-tRNA synthetase. The reaction takes place in the presence of glutamine and ATP through an activated gamma-phospho-Glu-tRNA(Gln). The polypeptide is Glutamyl-tRNA(Gln) amidotransferase subunit A (Geobacter sulfurreducens (strain ATCC 51573 / DSM 12127 / PCA)).